The following is a 318-amino-acid chain: Homoserine kinase (318 aa).

Residue 97-107 participates in ATP binding; the sequence is PIGSGLGSSAC.

This sequence belongs to the GHMP kinase family. Homoserine kinase subfamily.

It is found in the cytoplasm. It catalyses the reaction L-homoserine + ATP = O-phospho-L-homoserine + ADP + H(+). Its pathway is amino-acid biosynthesis; L-threonine biosynthesis; L-threonine from L-aspartate: step 4/5. In terms of biological role, catalyzes the ATP-dependent phosphorylation of L-homoserine to L-homoserine phosphate. This is Homoserine kinase from Vibrio cholerae serotype O1 (strain ATCC 39541 / Classical Ogawa 395 / O395).